Here is a 71-residue protein sequence, read N- to C-terminus: Protein CYSTEINE-RICH TRANSMEMBRANE MODULE 6 (71 aa).

Residues 1–12 are compositionally biased toward polar residues; that stretch reads MSQYSQNQSSGA. The segment at 1–36 is disordered; that stretch reads MSQYSQNQSSGAYPTPPVSTGPYVAPPPLGYPTNDT. Pro residues predominate over residues 14-30; that stretch reads PTPPVSTGPYVAPPPLG. A helical membrane pass occupies residues 48–64; the sequence is SKGDGFLKGCLAAMCCC.

The protein belongs to the CYSTM1 family. In terms of assembly, homodimer and heterodimers. Interacts with CYSTM7 and WIH1/CYSTM13. In terms of tissue distribution, mostly expressed in roots, stems, rosette leaves and siliques and, to a lower extent, in flowers and cauline leaves.

The protein resides in the cell membrane. The protein localises to the cytoplasm. In terms of biological role, involved in resistance to abiotic stress. The protein is Protein CYSTEINE-RICH TRANSMEMBRANE MODULE 6 of Arabidopsis thaliana (Mouse-ear cress).